We begin with the raw amino-acid sequence, 146 residues long: Ribosomal RNA large subunit methyltransferase H (146 aa).

Residues L60, G93, and 112-117 (MGKMTL) each bind S-adenosyl-L-methionine.

Belongs to the RNA methyltransferase RlmH family. In terms of assembly, homodimer.

Its subcellular location is the cytoplasm. It catalyses the reaction pseudouridine(1915) in 23S rRNA + S-adenosyl-L-methionine = N(3)-methylpseudouridine(1915) in 23S rRNA + S-adenosyl-L-homocysteine + H(+). Specifically methylates the pseudouridine at position 1915 (m3Psi1915) in 23S rRNA. This chain is Ribosomal RNA large subunit methyltransferase H, found in Koribacter versatilis (strain Ellin345).